The following is a 160-amino-acid chain: Endoribonuclease YbeY (160 aa).

Zn(2+) is bound by residues His121, His125, and His131.

Belongs to the endoribonuclease YbeY family. It depends on Zn(2+) as a cofactor.

The protein localises to the cytoplasm. Single strand-specific metallo-endoribonuclease involved in late-stage 70S ribosome quality control and in maturation of the 3' terminus of the 16S rRNA. This is Endoribonuclease YbeY from Hydrogenovibrio crunogenus (strain DSM 25203 / XCL-2) (Thiomicrospira crunogena).